The chain runs to 459 residues: Bifunctional protein GlmU (459 aa).

The pyrophosphorylase stretch occupies residues 1–229; that stretch reads MSNFAIXLAA…FDESLGVNDR (229 aa). UDP-N-acetyl-alpha-D-glucosamine contacts are provided by residues 8–11, K22, Q72, and 77–78; these read LAAG and GT. D102 contacts Mg(2+). UDP-N-acetyl-alpha-D-glucosamine contacts are provided by G139, E154, N169, and N227. N227 is a binding site for Mg(2+). Residues 230–250 are linker; sequence VALATAESVMRRRINHKHMVN. The tract at residues 251-459 is N-acetyltransferase; it reads GVSFVNPEAT…TRLPHHPKNQ (209 aa). 2 residues coordinate UDP-N-acetyl-alpha-D-glucosamine: R332 and K350. H362 serves as the catalytic Proton acceptor. UDP-N-acetyl-alpha-D-glucosamine contacts are provided by Y365 and N376. Acetyl-CoA-binding positions include A379, 385–386, S404, A422, and R439; that span reads NY.

In the N-terminal section; belongs to the N-acetylglucosamine-1-phosphate uridyltransferase family. This sequence in the C-terminal section; belongs to the transferase hexapeptide repeat family. Homotrimer. The cofactor is Mg(2+).

The protein localises to the cytoplasm. It catalyses the reaction alpha-D-glucosamine 1-phosphate + acetyl-CoA = N-acetyl-alpha-D-glucosamine 1-phosphate + CoA + H(+). The enzyme catalyses N-acetyl-alpha-D-glucosamine 1-phosphate + UTP + H(+) = UDP-N-acetyl-alpha-D-glucosamine + diphosphate. The protein operates within nucleotide-sugar biosynthesis; UDP-N-acetyl-alpha-D-glucosamine biosynthesis; N-acetyl-alpha-D-glucosamine 1-phosphate from alpha-D-glucosamine 6-phosphate (route II): step 2/2. It functions in the pathway nucleotide-sugar biosynthesis; UDP-N-acetyl-alpha-D-glucosamine biosynthesis; UDP-N-acetyl-alpha-D-glucosamine from N-acetyl-alpha-D-glucosamine 1-phosphate: step 1/1. Its pathway is bacterial outer membrane biogenesis; LPS lipid A biosynthesis. Catalyzes the last two sequential reactions in the de novo biosynthetic pathway for UDP-N-acetylglucosamine (UDP-GlcNAc). The C-terminal domain catalyzes the transfer of acetyl group from acetyl coenzyme A to glucosamine-1-phosphate (GlcN-1-P) to produce N-acetylglucosamine-1-phosphate (GlcNAc-1-P), which is converted into UDP-GlcNAc by the transfer of uridine 5-monophosphate (from uridine 5-triphosphate), a reaction catalyzed by the N-terminal domain. The protein is Bifunctional protein GlmU of Streptococcus pneumoniae serotype 19F (strain G54).